A 309-amino-acid chain; its full sequence is Cutinase (309 aa).

The first 47 residues, 1–47 (MSALTSQPTSSGSSEKIPRLRGWRAKAAGVVLAALALTTGVAAPAPA), serve as a signal peptide directing secretion. Ser-178 (nucleophile) is an active-site residue. Active-site charge relay system residues include Asp-224 and His-256. A disulfide bond links Cys-289 and Cys-305.

This sequence belongs to the AB hydrolase superfamily.

It localises to the secreted. It catalyses the reaction a carboxylic ester + H2O = an alcohol + a carboxylate + H(+). It carries out the reaction a triacylglycerol + H2O = a diacylglycerol + a fatty acid + H(+). The catalysed reaction is 1,2,3-tri-(9Z-octadecenoyl)-glycerol + H2O = di-(9Z)-octadecenoylglycerol + (9Z)-octadecenoate + H(+). The enzyme catalyses (6-hydroxyhexanoyl)(n) + H2O = (6-hydroxyhexanoyl)(n-1) + 6-hydroxyhexanoate + H(+). It catalyses the reaction cutin + H2O = cutin monomers.. No effect on activity by SDS or chelating agents ethylenediaminetetraacetic acid (EDTA) or sodium citrate. No effect on activity by metal ions Ag(+), Ba(2+), Ca(2+), Co(2+), Cu(2+), Mn(2+), Ni(2+), Pb(2+) or Zn(2+). Activated by 1 mM digitonin and sodium deoxycholate, and reducing agents 1 mM 1,4-dithiothreitol, beta-mercaptoethanol and ascorbic acid. Activated by benzene, n-hexane, p-xylene and toluene. Activated by Fe(3+). Inhibited slightly by 1 mM of different chain length fatty acids, and only marginally by 6.0 M urea. Inhibited strongly with chemical modification by reagents phenyl methyl sulfonylfluorid (PMSF), 1-ethyl-3-(3-dimethylaminopropyl) carbodiimide (EDAC), diethylpyrocarbonate (DEPC) and N-bromosuccinimide (NBS). Inhibited by pyridine, DMSO, t-butanol and dodecane. Inhibited by Li(+), Hg(2+) and Mg(2+). No inhibition with chemical modification by reagents N-acetylimidazole (NAI), citraconic anhydride (CA), iodoacetate (IA) and phenylglyoxal (PG). Its function is as follows. Catalyzes the hydrolysis of cutin, a polyester that forms the structure of plant cuticle. Shows esterase activity towards p-nitrophenol-linked aliphatic esters (pNP-aliphatic esters). Has a preference for medium chain length (C-4 to C-12) fatty acid esters. Active with p-nitrophenyl palmitate (p-NPP) as substrate. Hydrolyzes triacylglycerol substrates non-specifically with a preference for long, unsaturated fatty acyl chains with the highest activity for triolein. Substrates with cis-9 unsaturation are preferred over the saturated triacylglycerols. Hydrolyzes a wide range of natural oils, especially olive oil, with relatively high activity. Capable of catalyzing synthesis of the flavor ester isoamyl acetate by esterification of isoamyl alcohol using acetic acid as an acyl donor. Degrades synthetic aliphatic polyesters, namely poly(1,4-butylene succinate) extended with 1,6-diisocyanatohexane (PBSc-D) and poly(epsilon-caprolactone) (PCL) plastics. Does not degrade poly(lactic acid) (PLA) nor aromatic poly(ethylene terephthalate) (PET), the most abundant polyester plastic in the world. In Amycolatopsis mediterranei (strain S699) (Nocardia mediterranei), this protein is Cutinase.